The chain runs to 128 residues: L-ectoine synthase (128 aa).

The protein belongs to the ectoine synthase family.

It catalyses the reaction (2S)-4-acetamido-2-aminobutanoate = L-ectoine + H2O. The protein operates within amine and polyamine biosynthesis; ectoine biosynthesis; L-ectoine from L-aspartate 4-semialdehyde: step 3/3. Catalyzes the circularization of gamma-N-acetyl-alpha,gamma-diaminobutyric acid (ADABA) to ectoine (1,4,5,6-tetrahydro-2-methyl-4-pyrimidine carboxylic acid), which is an excellent osmoprotectant. This is L-ectoine synthase from Aliivibrio fischeri (strain ATCC 700601 / ES114) (Vibrio fischeri).